The sequence spans 426 residues: Glutamate-1-semialdehyde 2,1-aminomutase (426 aa).

Residue Lys-265 is modified to N6-(pyridoxal phosphate)lysine.

It belongs to the class-III pyridoxal-phosphate-dependent aminotransferase family. HemL subfamily. Homodimer. The cofactor is pyridoxal 5'-phosphate.

The protein localises to the cytoplasm. It carries out the reaction (S)-4-amino-5-oxopentanoate = 5-aminolevulinate. Its pathway is porphyrin-containing compound metabolism; protoporphyrin-IX biosynthesis; 5-aminolevulinate from L-glutamyl-tRNA(Glu): step 2/2. This is Glutamate-1-semialdehyde 2,1-aminomutase from Paraburkholderia phymatum (strain DSM 17167 / CIP 108236 / LMG 21445 / STM815) (Burkholderia phymatum).